The chain runs to 446 residues: Glucosylglycerate hydrolase (446 aa).

Residues tyrosine 36, 40–43, tyrosine 88, glutamine 115, and glycine 180 each bind substrate; that span reads WSWD. Aspartate 182 serves as the catalytic Proton donor. Residues arginine 216 and 375–376 contribute to the substrate site; that span reads YW. Glutamate 419 serves as the catalytic Proton acceptor. A substrate-binding site is contributed by glutamine 434.

The protein belongs to the glycosyl hydrolase 63 family. Homotetramer. Dimer of dimers.

It catalyses the reaction (2R)-2-O-(alpha-D-glucopyranosyl)-glycerate + H2O = (R)-glycerate + D-glucose. Activity is not dependent on divalent cations, but it is enhanced by Mg(2+). In terms of biological role, catalyzes the hydrolysis of glucosylglycerate (GG) to glycerate and glucose. Involved in recovery from nitrogen starvation by promoting the rapid mobilization of the glucosylglycerate that accumulates under these conditions. Can also hydrolyze mannosylglycerate (MG), with tenfold lower efficiency. The chain is Glucosylglycerate hydrolase from Mycolicibacterium hassiacum (strain DSM 44199 / CIP 105218 / JCM 12690 / 3849) (Mycobacterium hassiacum).